Reading from the N-terminus, the 142-residue chain is Putative pre-16S rRNA nuclease (142 aa).

This sequence belongs to the YqgF nuclease family.

Its subcellular location is the cytoplasm. In terms of biological role, could be a nuclease involved in processing of the 5'-end of pre-16S rRNA. The sequence is that of Putative pre-16S rRNA nuclease from Mesoplasma florum (strain ATCC 33453 / NBRC 100688 / NCTC 11704 / L1) (Acholeplasma florum).